The sequence spans 175 residues: uncharacterized protein (175 aa).

5 consecutive transmembrane segments (helical) span residues M25–S45, A46–L66, F97–V117, W124–L144, and T155–I175.

The protein belongs to the amino acid-polyamine-organocation (APC) superfamily.

It is found in the cell membrane. This is an uncharacterized protein from Lactobacillus delbrueckii subsp. lactis.